Reading from the N-terminus, the 287-residue chain is Bifunctional protein FolD (287 aa).

Residues 166-168 (GAS) and Ile-232 each bind NADP(+).

It belongs to the tetrahydrofolate dehydrogenase/cyclohydrolase family. As to quaternary structure, homodimer.

The enzyme catalyses (6R)-5,10-methylene-5,6,7,8-tetrahydrofolate + NADP(+) = (6R)-5,10-methenyltetrahydrofolate + NADPH. It catalyses the reaction (6R)-5,10-methenyltetrahydrofolate + H2O = (6R)-10-formyltetrahydrofolate + H(+). Its pathway is one-carbon metabolism; tetrahydrofolate interconversion. Functionally, catalyzes the oxidation of 5,10-methylenetetrahydrofolate to 5,10-methenyltetrahydrofolate and then the hydrolysis of 5,10-methenyltetrahydrofolate to 10-formyltetrahydrofolate. This is Bifunctional protein FolD from Aeromonas hydrophila subsp. hydrophila (strain ATCC 7966 / DSM 30187 / BCRC 13018 / CCUG 14551 / JCM 1027 / KCTC 2358 / NCIMB 9240 / NCTC 8049).